The chain runs to 158 residues: Ribonuclease H (158 aa).

Positions 1–142 constitute an RNase H type-1 domain; that stretch reads MRKQVEIFTD…CDELARAAAM (142 aa). Residues Asp-10, Glu-48, Asp-70, and Asp-134 each coordinate Mg(2+).

Belongs to the RNase H family. Monomer. The cofactor is Mg(2+).

The protein localises to the cytoplasm. The catalysed reaction is Endonucleolytic cleavage to 5'-phosphomonoester.. Functionally, endonuclease that specifically degrades the RNA of RNA-DNA hybrids. The chain is Ribonuclease H from Cronobacter sakazakii (strain ATCC BAA-894) (Enterobacter sakazakii).